Consider the following 314-residue polypeptide: Homoserine O-acetyltransferase (314 aa).

Catalysis depends on cysteine 142, which acts as the Acyl-thioester intermediate. Substrate contacts are provided by lysine 163 and serine 192. Histidine 235 serves as the catalytic Proton acceptor. Residue glutamate 237 is part of the active site. Residue arginine 249 coordinates substrate.

The protein belongs to the MetA family.

It is found in the cytoplasm. The enzyme catalyses L-homoserine + acetyl-CoA = O-acetyl-L-homoserine + CoA. It functions in the pathway amino-acid biosynthesis; L-methionine biosynthesis via de novo pathway; O-acetyl-L-homoserine from L-homoserine: step 1/1. Functionally, transfers an acetyl group from acetyl-CoA to L-homoserine, forming acetyl-L-homoserine. The chain is Homoserine O-acetyltransferase from Streptococcus pneumoniae serotype 19F (strain G54).